The sequence spans 186 residues: Elongation factor P (186 aa).

The protein belongs to the elongation factor P family.

The protein localises to the cytoplasm. The protein operates within protein biosynthesis; polypeptide chain elongation. Its function is as follows. Involved in peptide bond synthesis. Stimulates efficient translation and peptide-bond synthesis on native or reconstituted 70S ribosomes in vitro. Probably functions indirectly by altering the affinity of the ribosome for aminoacyl-tRNA, thus increasing their reactivity as acceptors for peptidyl transferase. The sequence is that of Elongation factor P from Prochlorococcus marinus (strain MIT 9312).